Here is a 1107-residue protein sequence, read N- to C-terminus: Rho GTPase-activating protein 45 (1107 aa).

Residues Met-1–Phe-99 are disordered. Residues Asp-37–Ser-55 show a composition bias toward low complexity. Polar residues predominate over residues Gly-56–Arg-66. Coiled coils occupy residues Glu-103–Lys-132 and Asn-363–Gln-485. The region spanning Glu-261–Gln-524 is the F-BAR domain. Composition is skewed to basic and acidic residues over residues Asn-414–Ser-423, Arg-434–Ala-444, and Glu-573–Gly-588. 2 disordered regions span residues Asn-414–Ala-444 and Phe-564–His-595. The Phorbol-ester/DAG-type zinc finger occupies Thr-671 to Cys-716. Residues Arg-730–Phe-942 enclose the Rho-GAP domain. The tract at residues Leu-981–Pro-1036 is disordered. Over residues Lys-1015–Ser-1031 the composition is skewed to polar residues.

Its subcellular location is the cytoplasm. It is found in the cell projection. The protein localises to the ruffle membrane. Contains a GTPase activator for the Rho-type GTPases (RhoGAP) domain that would be able to negatively regulate the actin cytoskeleton as well as cell spreading. However, also contains N-terminally a BAR-domin which is able to play an autoinhibitory effect on this RhoGAP activity. The sequence is that of Rho GTPase-activating protein 45 from Xenopus laevis (African clawed frog).